A 229-amino-acid chain; its full sequence is MATTVVLCSGGLDSSVIAKWAVEELGGRVICLFVDYGQRNAPFERRAAERIAEAVGAEFETVGTFWLRRLCPDNPMFAGRLPREAGTEDLSANWLPARNWNLLGVAAALCDHLYLEGEDDEFHIVWGINAEEAERFPDNTKEFADAVAEALKRGLPSRPRLHSPLAELYKPGIVRLGSELGAPMELSVSCYNPIWEDDTPVHCGECEACYHRKRAFERAGIEDPTEYLE.

8 to 18 contributes to the ATP binding site; the sequence is CSGGLDSSVIA. 4 residues coordinate Zn(2+): Cys-190, Cys-203, Cys-206, and Cys-209.

Belongs to the QueC family. The cofactor is Zn(2+).

It catalyses the reaction 7-carboxy-7-deazaguanine + NH4(+) + ATP = 7-cyano-7-deazaguanine + ADP + phosphate + H2O + H(+). Its pathway is purine metabolism; 7-cyano-7-deazaguanine biosynthesis. Its function is as follows. Catalyzes the ATP-dependent conversion of 7-carboxy-7-deazaguanine (CDG) to 7-cyano-7-deazaguanine (preQ(0)). The protein is 7-cyano-7-deazaguanine synthase of Methanopyrus kandleri (strain AV19 / DSM 6324 / JCM 9639 / NBRC 100938).